We begin with the raw amino-acid sequence, 185 residues long: dCTP deaminase (185 aa).

DCTP contacts are provided by residues lysine 107–arginine 112, threonine 131–glutamate 133, glutamine 152, tyrosine 166, and glutamine 176. Glutamate 133 (proton donor/acceptor) is an active-site residue.

This sequence belongs to the dCTP deaminase family. Homotrimer.

The catalysed reaction is dCTP + H2O + H(+) = dUTP + NH4(+). The protein operates within pyrimidine metabolism; dUMP biosynthesis; dUMP from dCTP (dUTP route): step 1/2. Its function is as follows. Catalyzes the deamination of dCTP to dUTP. This Neorickettsia sennetsu (strain ATCC VR-367 / Miyayama) (Ehrlichia sennetsu) protein is dCTP deaminase.